A 157-amino-acid polypeptide reads, in one-letter code: Ribosome maturation factor RimP (157 aa).

The protein belongs to the RimP family.

Its subcellular location is the cytoplasm. In terms of biological role, required for maturation of 30S ribosomal subunits. The protein is Ribosome maturation factor RimP of Enterococcus faecalis (strain ATCC 700802 / V583).